Consider the following 316-residue polypeptide: Ribosomal RNA small subunit methyltransferase H (316 aa).

S-adenosyl-L-methionine contacts are provided by residues 35-37 (AGH), aspartate 55, phenylalanine 84, aspartate 105, and glutamine 112.

Belongs to the methyltransferase superfamily. RsmH family.

Its subcellular location is the cytoplasm. It catalyses the reaction cytidine(1402) in 16S rRNA + S-adenosyl-L-methionine = N(4)-methylcytidine(1402) in 16S rRNA + S-adenosyl-L-homocysteine + H(+). In terms of biological role, specifically methylates the N4 position of cytidine in position 1402 (C1402) of 16S rRNA. The protein is Ribosomal RNA small subunit methyltransferase H of Streptococcus pneumoniae (strain 70585).